A 392-amino-acid polypeptide reads, in one-letter code: Protein-glutamate methylesterase/protein-glutamine glutaminase (392 aa).

The Response regulatory domain occupies 9–126; the sequence is TVLIVDDSPF…GADIQALARD (118 aa). Asp-60 is subject to 4-aspartylphosphate. The tract at residues 148–194 is disordered; that stretch reads VSRISSASGSRPPWTAGAASENTNRLSSPGSTSSTLGSAKGRSLDSG. The segment covering 173–185 has biased composition (low complexity); sequence LSSPGSTSSTLGS. Residues 198-392 enclose the CheB-type methylesterase domain; the sequence is PKYPVEIVAI…RHIVECVQRR (195 aa). Active-site residues include Ser-210, His-237, and Asp-334.

Belongs to the CheB family. Post-translationally, phosphorylated by CheA. Phosphorylation of the N-terminal regulatory domain activates the methylesterase activity.

It is found in the cytoplasm. The enzyme catalyses [protein]-L-glutamate 5-O-methyl ester + H2O = L-glutamyl-[protein] + methanol + H(+). It carries out the reaction L-glutaminyl-[protein] + H2O = L-glutamyl-[protein] + NH4(+). Involved in chemotaxis. Part of a chemotaxis signal transduction system that modulates chemotaxis in response to various stimuli. Catalyzes the demethylation of specific methylglutamate residues introduced into the chemoreceptors (methyl-accepting chemotaxis proteins or MCP) by CheR. Also mediates the irreversible deamidation of specific glutamine residues to glutamic acid. This Desulfitobacterium hafniense (strain Y51) protein is Protein-glutamate methylesterase/protein-glutamine glutaminase.